The primary structure comprises 313 residues: Olfactory receptor 4M2 (313 aa).

Residues 1-25 (METANYTKVTEFVLTGLSQTPEVQL) lie on the Cytoplasmic side of the membrane. A helical transmembrane segment spans residues 26–46 (VLFVIFLSFYLFILPGNILII). The Extracellular portion of the chain corresponds to 47–57 (CTISLDPHLTS). A helical transmembrane segment spans residues 58–78 (PMYFLLANLAFLDIWYSSITA). Residues 79–97 (PEMLIDFFVERKIISFDEC) lie on the Cytoplasmic side of the membrane. C97 and C179 are joined by a disulfide. Residues 98 to 118 (IAQLFFLHFAGASEMFLLTVM) form a helical membrane-spanning segment. Topologically, residues 119-142 (AFDLYTAICRPLHYATIMNQRLCC) are extracellular. The chain crosses the membrane as a helical span at residues 143-163 (ILVALSWRGGFIHSIIQVALI). The Cytoplasmic portion of the chain corresponds to 164 to 204 (VRLPFCGPNELDSYFCDITQVVRIACANTFPEELVMICSSG). Residues 205–225 (LISVVCLIALLMSYAFLLALL) form a helical membrane-spanning segment. Residues 226–238 (KKLSGSGENTNRA) are Extracellular-facing. Residues 239–259 (VSTCYSHITIVVLMFGPSIYI) traverse the membrane as a helical segment. The Cytoplasmic portion of the chain corresponds to 260–270 (YARPFDSFSLD). A helical transmembrane segment spans residues 271-291 (KVVSVFNTLIFPLHNPIIYTL). The Extracellular portion of the chain corresponds to 292 to 313 (RNKEVKAAMRKLVTKYILCKEK).

The protein belongs to the G-protein coupled receptor 1 family.

The protein resides in the membrane. In terms of biological role, odorant receptor. The chain is Olfactory receptor 4M2 from Homo sapiens (Human).